The following is a 406-amino-acid chain: Homocysteine-responsive endoplasmic reticulum-resident ubiquitin-like domain member 2 protein (406 aa).

A Ubiquitin-like domain is found at 10–89 (VTLIIKAPNQ…HMVHLVCTSR (80 aa)). Residues 86–156 (CTSRTPPSSP…PQAQTDPAQS (71 aa)) are disordered. Low complexity-rich tracts occupy residues 87–98 (TSRTPPSSPKSS) and 109–139 (SNSN…SSSE). The segment covering 145-156 (TLPQAQTDPAQS) has biased composition (polar residues). The chain crosses the membrane as a helical span at residues 302-322 (FIMVMGAMLLVYLHQAGWFPF).

It is found in the membrane. Functionally, could be involved in the unfolded protein response (UPR) pathway. The polypeptide is Homocysteine-responsive endoplasmic reticulum-resident ubiquitin-like domain member 2 protein (HERPUD2) (Bos taurus (Bovine)).